The chain runs to 880 residues: GATOR2 complex protein MIOS-A (880 aa).

WD repeat units lie at residues 60–102 (SDTP…NSKC), 113–157 (KHAR…TPEV), 185–224 (GQND…QKMF), 226–264 (NTKA…KPVL), 268–309 (EQPK…TPIG), and 399–441 (RLRA…KQYA). The segment at 740–786 (VSCNFCGKSISYSCSSVPHQGRGFSQYGVSGSPTKSKFTSCPGCRKP) adopts a C4-type zinc-finger fold. 13 residues coordinate Zn(2+): Cys-742, Cys-745, Cys-780, Cys-783, Cys-793, Cys-832, Cys-835, His-837, His-840, His-843, Cys-854, Cys-859, and Cys-863. Residues 787 to 868 (LPRCALCLIN…CSCKCMQLDT (82 aa)) form an RING-type; atypical zinc finger.

The protein belongs to the WD repeat mio family. In terms of assembly, component of the GATOR2 subcomplex, composed of MIOS, SEC13, SEH1L, WDR24 and WDR59. The GATOR2 complex interacts with CASTOR1 and CASTOR2; the interaction is negatively regulated by arginine. The GATOR2 complex interacts with SESN1, SESN2 and SESN3; the interaction is negatively regulated by amino acids. Interacts with SAR1; the interaction is direct, disrupted by leucine and mediates the interaction of SAR1 with the GATOR2 complex to negatively regulate the TORC1 signaling upon leucine deprivation.

It is found in the lysosome membrane. With respect to regulation, the GATOR2 complex is negatively regulated by the upstream amino acid sensors CASTOR1 and SESN2, which sequester the GATOR2 complex in absence of amino acids. In the presence of abundant amino acids, GATOR2 is released from CASTOR1 and SESN2 and activated. In terms of biological role, as a component of the GATOR2 complex, functions as an activator of the amino acid-sensing branch of the mTORC1 signaling pathway. The GATOR2 complex indirectly activates mTORC1 through the inhibition of the GATOR1 subcomplex. GATOR2 probably acts as an E3 ubiquitin-protein ligase toward GATOR1. In the presence of abundant amino acids, the GATOR2 complex mediates ubiquitination of the NPRL2 core component of the GATOR1 complex, leading to GATOR1 inactivation. In the absence of amino acids, GATOR2 is inhibited, activating the GATOR1 complex. Within the GATOR2 complex, MIOS is required to prevent autoubiquitination of WDR24, the catalytic subunit of the complex. The polypeptide is GATOR2 complex protein MIOS-A (Xenopus laevis (African clawed frog)).